A 241-amino-acid chain; its full sequence is Probable WRKY transcription factor 63 (241 aa).

Residues 56-79 form a disordered region; it reads NSPNRQPHHESSSRDMAGLVPQRS. A DNA-binding region (WRKY) is located at residues 97-165; the sequence is SPNPRLDDGF…YLGQHTCKAF (69 aa).

Belongs to the WRKY group III family.

The protein localises to the nucleus. Transcription factor. Interacts specifically with the W box (5'-(T)TGAC[CT]-3'), a frequently occurring elicitor-responsive cis-acting element. In Arabidopsis thaliana (Mouse-ear cress), this protein is Probable WRKY transcription factor 63 (WRKY63).